The primary structure comprises 400 residues: Nicotinate phosphoribosyltransferase (400 aa).

Histidine 220 is modified (phosphohistidine; by autocatalysis).

The protein belongs to the NAPRTase family. In terms of processing, transiently phosphorylated on a His residue during the reaction cycle. Phosphorylation strongly increases the affinity for substrates and increases the rate of nicotinate D-ribonucleotide production. Dephosphorylation regenerates the low-affinity form of the enzyme, leading to product release.

The enzyme catalyses nicotinate + 5-phospho-alpha-D-ribose 1-diphosphate + ATP + H2O = nicotinate beta-D-ribonucleotide + ADP + phosphate + diphosphate. Its pathway is cofactor biosynthesis; NAD(+) biosynthesis; nicotinate D-ribonucleotide from nicotinate: step 1/1. Functionally, catalyzes the synthesis of beta-nicotinate D-ribonucleotide from nicotinate and 5-phospho-D-ribose 1-phosphate at the expense of ATP. This Salmonella heidelberg (strain SL476) protein is Nicotinate phosphoribosyltransferase.